Consider the following 150-residue polypeptide: Oleosin Ara h 10.0102 (150 aa).

2 helical membrane passes run 39–59 (VIAV…AGLA) and 73–93 (LFIL…LSVA).

This sequence belongs to the oleosin family. As to expression, expressed in seeds (at protein level).

The protein localises to the lipid droplet. It localises to the membrane. Functionally, may have a structural role to stabilize the lipid body during desiccation of the seed by preventing coalescence of the oil. Probably interacts with both lipid and phospholipid moieties of lipid bodies. May also provide recognition signals for specific lipase anchorage in lipolysis during seedling growth. The sequence is that of Oleosin Ara h 10.0102 from Arachis hypogaea (Peanut).